Consider the following 101-residue polypeptide: Small ribosomal subunit protein uS14 (101 aa).

It belongs to the universal ribosomal protein uS14 family. In terms of assembly, part of the 30S ribosomal subunit. Contacts proteins S3 and S10.

Binds 16S rRNA, required for the assembly of 30S particles and may also be responsible for determining the conformation of the 16S rRNA at the A site. The chain is Small ribosomal subunit protein uS14 from Chlamydia trachomatis serovar L2 (strain ATCC VR-902B / DSM 19102 / 434/Bu).